A 498-amino-acid polypeptide reads, in one-letter code: ATP synthase subunit alpha, chloroplastic (498 aa).

Residue 170 to 177 (GDRQTGKT) participates in ATP binding.

The protein belongs to the ATPase alpha/beta chains family. In terms of assembly, F-type ATPases have 2 components, CF(1) - the catalytic core - and CF(0) - the membrane proton channel. CF(1) has five subunits: alpha(3), beta(3), gamma(1), delta(1), epsilon(1). CF(0) has four main subunits: a, b, b' and c.

The protein resides in the plastid. The protein localises to the chloroplast thylakoid membrane. It carries out the reaction ATP + H2O + 4 H(+)(in) = ADP + phosphate + 5 H(+)(out). Functionally, produces ATP from ADP in the presence of a proton gradient across the membrane. The alpha chain is a regulatory subunit. This Oltmannsiellopsis viridis (Marine flagellate) protein is ATP synthase subunit alpha, chloroplastic.